Here is a 51-residue protein sequence, read N- to C-terminus: Magnetosome protein Mms5 (51 aa).

Topologically, residues 1–8 are lumenal; the sequence is MLSAKGVS. The interval 9–16 is LG region; that stretch reads LGLGLGLG. A helical membrane pass occupies residues 9 to 29; that stretch reads LGLGLGLGAWGPVLLGVVGVA. Topologically, residues 30–51 are cytoplasmic; that stretch reads GALALYGYYKNRNAEPAAAEAV.

It belongs to the magnetosome MamD/Mms5 family. Post-translationally, may undergo N-terminal cleavage.

It localises to the magnetosome membrane. In terms of biological role, might be involved in magnetite crystal growth. The chain is Magnetosome protein Mms5 from Magnetospirillum gryphiswaldense (strain DSM 6361 / JCM 21280 / NBRC 15271 / MSR-1).